The chain runs to 73 residues: UPF0435 protein lwe1727 (73 aa).

It belongs to the UPF0435 family.

The protein is UPF0435 protein lwe1727 of Listeria welshimeri serovar 6b (strain ATCC 35897 / DSM 20650 / CCUG 15529 / CIP 8149 / NCTC 11857 / SLCC 5334 / V8).